The sequence spans 56 residues: uncharacterized protein (56 aa).

2 helical membrane passes run 5-23 (VLIF…YWIY) and 33-55 (ITAG…ILGW).

Its subcellular location is the cell membrane. This is an uncharacterized protein from Archaeoglobus fulgidus (strain ATCC 49558 / DSM 4304 / JCM 9628 / NBRC 100126 / VC-16).